The primary structure comprises 247 residues: Tyrosine recombinase XerD-like (247 aa).

Positions 1 to 72 constitute a Core-binding (CB) domain; the sequence is MIKHIEAFLA…TVNQFLHYLY (72 aa). The Tyr recombinase domain maps to 91–247; that stretch reads STKVPFTYQL…PITLEKYYRL (157 aa). Residue Arg-212 is part of the active site. Catalysis depends on Tyr-244, which acts as the O-(3'-phospho-DNA)-tyrosine intermediate.

This sequence belongs to the 'phage' integrase family. XerD-like subfamily.

The protein resides in the cytoplasm. In terms of biological role, putative tyrosine recombinase. Not involved in the cutting and rejoining of the recombining DNA molecules on dif(SL) site. This Streptococcus uberis (strain ATCC BAA-854 / 0140J) protein is Tyrosine recombinase XerD-like.